The following is a 362-amino-acid chain: Putative F-box protein At3g23260 (362 aa).

Residues 1–46 (MEWRSLPVELQEEILSRVPAKYLARLRSTSKQWNALSKTGSFAKKH) enclose the F-box domain.

This chain is Putative F-box protein At3g23260, found in Arabidopsis thaliana (Mouse-ear cress).